The chain runs to 565 residues: Proline--tRNA ligase (565 aa).

This sequence belongs to the class-II aminoacyl-tRNA synthetase family. ProS type 1 subfamily. As to quaternary structure, homodimer.

Its subcellular location is the cytoplasm. It catalyses the reaction tRNA(Pro) + L-proline + ATP = L-prolyl-tRNA(Pro) + AMP + diphosphate. Functionally, catalyzes the attachment of proline to tRNA(Pro) in a two-step reaction: proline is first activated by ATP to form Pro-AMP and then transferred to the acceptor end of tRNA(Pro). As ProRS can inadvertently accommodate and process non-cognate amino acids such as alanine and cysteine, to avoid such errors it has two additional distinct editing activities against alanine. One activity is designated as 'pretransfer' editing and involves the tRNA(Pro)-independent hydrolysis of activated Ala-AMP. The other activity is designated 'posttransfer' editing and involves deacylation of mischarged Ala-tRNA(Pro). The misacylated Cys-tRNA(Pro) is not edited by ProRS. The sequence is that of Proline--tRNA ligase from Lactobacillus gasseri (strain ATCC 33323 / DSM 20243 / BCRC 14619 / CIP 102991 / JCM 1131 / KCTC 3163 / NCIMB 11718 / NCTC 13722 / AM63).